We begin with the raw amino-acid sequence, 327 residues long: Zinc transport protein ZntB (327 aa).

At 1–273 the chain is on the cytoplasmic side; it reads MEAIKGSDVN…ARRTYTMSLM (273 aa). The chain crosses the membrane as a helical span at residues 274–294; it reads AMVFLPSTFLTGLFGVNLGGI. At 295-300 the chain is on the periplasmic side; it reads PGGGWQ. A helical membrane pass occupies residues 301 to 321; sequence FGFSIFCILLVVLIGGVALWL. At 322-327 the chain is on the cytoplasmic side; the sequence is YRSKWL.

The protein belongs to the CorA metal ion transporter (MIT) (TC 1.A.35) family.

It is found in the cell inner membrane. The catalysed reaction is Zn(2+)(out) + H(+)(out) = Zn(2+)(in) + H(+)(in). Its function is as follows. Zinc transporter. Acts as a Zn(2+):proton symporter, which likely mediates zinc ion uptake. The chain is Zinc transport protein ZntB from Shigella flexneri serotype 5b (strain 8401).